The chain runs to 50 residues: MYKLWLLFDPRRALVALSAFLFVLALIIHFIALSTDRFNWLEGKPAVKAA.

Residues 1–12 (MYKLWLLFDPRR) are Cytoplasmic-facing. A helical membrane pass occupies residues 13–33 (ALVALSAFLFVLALIIHFIAL). Residue His-29 participates in a bacteriochlorophyll binding. Over 34-50 (STDRFNWLEGKPAVKAA) the chain is Periplasmic.

It belongs to the antenna complex alpha subunit family. The core complex is formed by different alpha and beta chains, binding bacteriochlorophyll molecules, and arranged most probably in tetrameric structures disposed around the reaction center. The non-pigmented gamma chains may constitute additional components.

It is found in the cell inner membrane. Functionally, antenna complexes are light-harvesting systems, which transfer the excitation energy to the reaction centers. The polypeptide is Light-harvesting protein B-880 alpha chain (Rhodoblastus acidophilus (Rhodopseudomonas acidophila)).